Reading from the N-terminus, the 312-residue chain is uncharacterized protein (312 aa).

Basic and acidic residues-rich tracts occupy residues 1–17 and 28–39; these read MAKY…EQLE and PDRDGPRHSAKL. Residues 1-39 are disordered; sequence MAKYDHLELVRLPEQLERRKHGGGSPPPDRDGPRHSAKL.

This is an uncharacterized protein from Sinorhizobium fredii (strain NBRC 101917 / NGR234).